A 21-amino-acid chain; its full sequence is M-lycotoxin-Ls4a (21 aa).

At leucine 21 the chain carries Leucine amide.

Expressed by the venom gland.

The protein localises to the secreted. May inhibit growth of bacteria. The sequence is that of M-lycotoxin-Ls4a from Lycosa singoriensis (Wolf spider).